A 607-amino-acid chain; its full sequence is Phosphomethylpyrimidine synthase (607 aa).

Residues Asn-216, Met-245, Tyr-274, His-310, 330–332 (SRG), 371–374 (DGLR), and Glu-410 each bind substrate. Residue His-414 coordinates Zn(2+). Position 437 (Tyr-437) interacts with substrate. His-478 contacts Zn(2+). Residues Cys-558, Cys-561, and Cys-566 each contribute to the [4Fe-4S] cluster site.

Belongs to the ThiC family. As to quaternary structure, homodimer. [4Fe-4S] cluster is required as a cofactor.

The catalysed reaction is 5-amino-1-(5-phospho-beta-D-ribosyl)imidazole + S-adenosyl-L-methionine = 4-amino-2-methyl-5-(phosphooxymethyl)pyrimidine + CO + 5'-deoxyadenosine + formate + L-methionine + 3 H(+). It functions in the pathway cofactor biosynthesis; thiamine diphosphate biosynthesis. Its function is as follows. Catalyzes the synthesis of the hydroxymethylpyrimidine phosphate (HMP-P) moiety of thiamine from aminoimidazole ribotide (AIR) in a radical S-adenosyl-L-methionine (SAM)-dependent reaction. The polypeptide is Phosphomethylpyrimidine synthase (Agrobacterium fabrum (strain C58 / ATCC 33970) (Agrobacterium tumefaciens (strain C58))).